A 126-amino-acid chain; its full sequence is Desulfoferrodoxin (126 aa).

Residues C10, C13, C29, C30, H49, H69, H75, C116, and H119 each coordinate Fe cation.

Belongs to the desulfoferrodoxin family. As to quaternary structure, homodimer. Fe(3+) serves as cofactor. Requires Cu(2+) as cofactor.

The enzyme catalyses reduced [rubredoxin] + superoxide + 2 H(+) = oxidized [rubredoxin] + H2O2. Its function is as follows. Catalyzes the one-electron reduction of superoxide anion radical to hydrogen peroxide at a nonheme ferrous iron center. Plays a fundamental role in case of oxidative stress via its superoxide detoxification activity. This Nitratidesulfovibrio vulgaris (strain ATCC 29579 / DSM 644 / CCUG 34227 / NCIMB 8303 / VKM B-1760 / Hildenborough) (Desulfovibrio vulgaris) protein is Desulfoferrodoxin (dfx).